The following is a 116-amino-acid chain: Chorion protein S15 (116 aa).

An N-terminal signal peptide occupies residues 1 to 18; it reads MKFLIAFAVLALVACINA.

This sequence belongs to the chorion protein S15/S18 family.

It is found in the secreted. In terms of biological role, chorion membrane (egg shell) protein; plays a role in protecting the egg from the environment. The sequence is that of Chorion protein S15 (Cp15) from Drosophila virilis (Fruit fly).